Consider the following 430-residue polypeptide: Enolase (430 aa).

The tract at residues 1–140 is sufficient for secretion; that stretch reads MPYIVDVYAR…YQYLGGFNSK (140 aa). Thr-141 carries the phosphothreonine modification. Gln-163 provides a ligand contact to (2R)-2-phosphoglycerate. Catalysis depends on Glu-205, which acts as the Proton donor. Position 242 (Asp-242) interacts with Mg(2+). Residue Ser-259 is modified to Phosphoserine. A Phosphotyrosine modification is found at Tyr-281. Mg(2+) contacts are provided by Glu-287 and Asp-314. Ser-325 carries the phosphoserine modification. (2R)-2-phosphoglycerate contacts are provided by Lys-339, Arg-368, Ser-369, and Lys-390. The active-site Proton acceptor is the Lys-339.

It belongs to the enolase family. As to quaternary structure, homooctamer. Component of the RNA degradosome complex composed of rny, rnjA, rnjB, pnp, pfkA and eno (although rnjA and rnjB's presence is controversial). Mg(2+) is required as a cofactor. Phosphorylated during sporulation.

The protein localises to the cytoplasm. Its subcellular location is the secreted. It localises to the cell surface. It catalyses the reaction (2R)-2-phosphoglycerate = phosphoenolpyruvate + H2O. It participates in carbohydrate degradation; glycolysis; pyruvate from D-glyceraldehyde 3-phosphate: step 4/5. Its activity is regulated as follows. Covalent binding to the substrate (probably 2-PG) at Lys-339 of a small fraction of enolase causes inactivation of the enzyme, and possibly serves as a signal for the export of the protein. Citrate acts as a non-competitive inhibitor for both forward and reverse reactions, probably by chelating Mg(2+). Catalyzes the reversible conversion of 2-phosphoglycerate (2-PG) into phosphoenolpyruvate (PEP). It is essential for the degradation of carbohydrates via glycolysis. Its function is as follows. A component of the RNA degradosome, a multi-enzyme complex involved in RNA processing and messenger RNA degradation. The chain is Enolase from Bacillus subtilis (strain 168).